Consider the following 132-residue polypeptide: Small ribosomal subunit protein uS8 (132 aa).

The protein belongs to the universal ribosomal protein uS8 family. As to quaternary structure, part of the 30S ribosomal subunit. Contacts proteins S5 and S12.

Functionally, one of the primary rRNA binding proteins, it binds directly to 16S rRNA central domain where it helps coordinate assembly of the platform of the 30S subunit. This Bartonella bacilliformis (strain ATCC 35685 / KC583 / Herrer 020/F12,63) protein is Small ribosomal subunit protein uS8.